The chain runs to 369 residues: Anhydro-N-acetylmuramic acid kinase (369 aa).

ATP is bound at residue 9–16 (GTSLDAVD).

The protein belongs to the anhydro-N-acetylmuramic acid kinase family.

It catalyses the reaction 1,6-anhydro-N-acetyl-beta-muramate + ATP + H2O = N-acetyl-D-muramate 6-phosphate + ADP + H(+). The protein operates within amino-sugar metabolism; 1,6-anhydro-N-acetylmuramate degradation. It participates in cell wall biogenesis; peptidoglycan recycling. In terms of biological role, catalyzes the specific phosphorylation of 1,6-anhydro-N-acetylmuramic acid (anhMurNAc) with the simultaneous cleavage of the 1,6-anhydro ring, generating MurNAc-6-P. Is required for the utilization of anhMurNAc either imported from the medium or derived from its own cell wall murein, and thus plays a role in cell wall recycling. This chain is Anhydro-N-acetylmuramic acid kinase, found in Phenylobacterium zucineum (strain HLK1).